The sequence spans 188 residues: dCTP deaminase (188 aa).

Residues 111 to 116, 135 to 137, glutamine 156, tyrosine 170, and glutamine 180 contribute to the dCTP site; these read KSTYAR and TLE. Glutamate 137 (proton donor/acceptor) is an active-site residue.

It belongs to the dCTP deaminase family. Homotrimer.

The catalysed reaction is dCTP + H2O + H(+) = dUTP + NH4(+). The protein operates within pyrimidine metabolism; dUMP biosynthesis; dUMP from dCTP (dUTP route): step 1/2. In terms of biological role, catalyzes the deamination of dCTP to dUTP. In Janthinobacterium sp. (strain Marseille) (Minibacterium massiliensis), this protein is dCTP deaminase.